The following is a 369-amino-acid chain: Anhydro-N-acetylmuramic acid kinase (369 aa).

Residue 12-19 (GTSLDGVD) participates in ATP binding.

This sequence belongs to the anhydro-N-acetylmuramic acid kinase family.

The catalysed reaction is 1,6-anhydro-N-acetyl-beta-muramate + ATP + H2O = N-acetyl-D-muramate 6-phosphate + ADP + H(+). It functions in the pathway amino-sugar metabolism; 1,6-anhydro-N-acetylmuramate degradation. Its pathway is cell wall biogenesis; peptidoglycan recycling. In terms of biological role, catalyzes the specific phosphorylation of 1,6-anhydro-N-acetylmuramic acid (anhMurNAc) with the simultaneous cleavage of the 1,6-anhydro ring, generating MurNAc-6-P. Is required for the utilization of anhMurNAc either imported from the medium or derived from its own cell wall murein, and thus plays a role in cell wall recycling. The sequence is that of Anhydro-N-acetylmuramic acid kinase from Escherichia coli (strain SMS-3-5 / SECEC).